The primary structure comprises 330 residues: T-cell leukemia homeobox protein 1 (330 aa).

Positions 186-207 (DRFTGHPYQNRTPPKKKKPRTS) are disordered. A DNA-binding region (homeobox) is located at residues 201 to 260 (KKKPRTSFTRLQICELEKRFHRQKYLASAERAALAKALKMTDAQVKTWFQNRRTKWRRQT). Residue Lys-236 is modified to N6-acetyllysine.

As to quaternary structure, interacts with MEIS1, MEIS2, PBX1, PBX2 and PBX3.

It is found in the nucleus. In terms of biological role, controls the genesis of the spleen. Binds to the DNA sequence 5'-GGCGGTAAGTGG-3'. The sequence is that of T-cell leukemia homeobox protein 1 (TLX1) from Homo sapiens (Human).